Here is a 40-residue protein sequence, read N- to C-terminus: Light-harvesting protein B800/830/1020 beta-1 chain (40 aa).

Over 1 to 20 the chain is Cytoplasmic; it reads ANDIRPLRDFEDEEAQEFHQ. A bacteriochlorophyll is bound by residues H19 and H37. The chain crosses the membrane as a helical span at residues 21–40; the sequence is AAVQAFFLYVAVAFVAHLPV.

It belongs to the antenna complex beta subunit family. The core complex is formed by different alpha and beta chains, binding bacteriochlorophyll molecules, and arranged most probably in tetrameric structures disposed around the reaction center. The non-pigmented gamma chains may constitute additional components.

The protein resides in the cell inner membrane. Functionally, antenna complexes are light-harvesting systems, which transfer the excitation energy to the reaction centers. The sequence is that of Light-harvesting protein B800/830/1020 beta-1 chain from Halorhodospira halochloris (Ectothiorhodospira halochloris).